The sequence spans 396 residues: Purine ribonucleoside efflux pump NepI (396 aa).

The Cytoplasmic segment spans residues 1–21 (MSEFIAENRGADAITRPNWSA). The chain crosses the membrane as a helical span at residues 22–42 (VFSVAFCVACLIIVEFLPVSL). The Periplasmic portion of the chain corresponds to 43–54 (LTPMAQDLGISE). A helical membrane pass occupies residues 55 to 75 (GVAGQSVTVTAFVAMFASLFI). At 76–85 (TQTIQATDRR) the chain is on the cytoplasmic side. Residues 86–106 (YVVILFAVLLTLSCLLVSFAN) traverse the membrane as a helical segment. S107 is a topological domain (periplasmic). Residues 108 to 128 (FSLLLIGRACLGLALGGFWAM) form a helical membrane-spanning segment. Residues 129 to 147 (SASLTMRLVPPRTVPKALS) lie on the Cytoplasmic side of the membrane. A helical transmembrane segment spans residues 148–168 (VIFGAVSIALVIAAPLGSFLG). Residues 169–175 (ELIGWRN) lie on the Periplasmic side of the membrane. The helical transmembrane segment at 176-196 (VFNAAAVMGVLCIFWIIKSLP) threads the bilayer. At 197 to 215 (SLPGEPSHQKQNTFRLLQR) the chain is on the cytoplasmic side. The helical transmembrane segment at 216 to 236 (PGVMAGMIAIFMSFAGQFAFF) threads the bilayer. The Periplasmic portion of the chain corresponds to 237–255 (TYIRPVYMNLAGFGVDGLT). A helical transmembrane segment spans residues 256–276 (LVLLSFGIASFIGTSLSSFIL). The Cytoplasmic segment spans residues 277–281 (KRSVK). Residues 282–302 (LALAGAPLILAVSALVLTLWG) form a helical membrane-spanning segment. The Periplasmic segment spans residues 303-305 (SDK). Residues 306-326 (IVATGVAIIWGLTFALVPVGW) form a helical membrane-spanning segment. At 327–343 (STWITRSLADQAEKAGS) the chain is on the cytoplasmic side. The helical transmembrane segment at 344-364 (IQVAVIQLANTCGAAIGGYAL) threads the bilayer. Over 365 to 366 (DN) the chain is Periplasmic. Residues 367 to 387 (IGLTSPLMLSGTLMLLTALLV) traverse the membrane as a helical segment. The Cytoplasmic segment spans residues 388 to 396 (TAKVKMKKS).

It belongs to the major facilitator superfamily. DHA1 family. NepI (TC 2.A.1.2.26) subfamily.

It localises to the cell inner membrane. The catalysed reaction is inosine(in) + H(+)(out) = inosine(out) + H(+)(in). It catalyses the reaction guanosine(in) + H(+)(out) = guanosine(out) + H(+)(in). Involved in the efflux of purine ribonucleosides, such as inosine and guanosine. The protein is Purine ribonucleoside efflux pump NepI of Shigella flexneri.